The sequence spans 173 residues: Photosystem I assembly protein Ycf3 (173 aa).

TPR repeat units follow at residues 35–68 (AYVY…ETDP), 72–105 (GETL…NPKQ), and 120–153 (GRIA…NPGG).

This sequence belongs to the Ycf3 family.

Its subcellular location is the cellular thylakoid membrane. Essential for the assembly of the photosystem I (PSI) complex. May act as a chaperone-like factor to guide the assembly of the PSI subunits. This Synechococcus sp. (strain CC9902) protein is Photosystem I assembly protein Ycf3.